Reading from the N-terminus, the 780-residue chain is Cation channel sperm-associated protein 1 (780 aa).

Disordered regions lie at residues 1 to 37 (MDQN…PGHS), 71 to 306 (LSSH…QDHH), and 376 to 412 (QMSK…LQRT). The Cytoplasmic portion of the chain corresponds to 1–447 (MDQNSVPEKA…EMIRNLTQSL (447 aa)). Residues 110 to 122 (SYGEDYHDELQRD) show a composition bias toward basic and acidic residues. Positions 211–241 (QVPHRGWPHHHQVHHHGRSRHHEAHQHGKSP) are enriched in basic residues. The span at 261–284 (SDYHSEYHQGDHHPSEYHHGDHPH) shows a compositional bias: basic and acidic residues. A compositionally biased stretch (basic residues) spans 285–299 (HTQHHYHQTHRHRDY). The segment covering 387 to 401 (STKHSEDWGKEEGQF) has biased composition (basic and acidic residues). The span at 402 to 412 (QKRKTGRLQRT) shows a compositional bias: basic residues. A helical membrane pass occupies residues 448-469 (AFETFIFFVVCLNTVMLVAQTF). Over 470-478 (AEVEIRGEW) the chain is Extracellular. A helical transmembrane segment spans residues 479 to 500 (YFMALDSIFFCIYVVEALLKII). Over 501-508 (ALGLSYFF) the chain is Cytoplasmic. The chain crosses the membrane as a helical span at residues 509–531 (DFWNNLDFFIMAMAVLDFLLMQT). Residues 532-540 (HSFAIYHQS) are Extracellular-facing. A helical membrane pass occupies residues 541-563 (LFRILKVFKSLRALRAIRVLRRL). The Cytoplasmic portion of the chain corresponds to 564-581 (SFLTSVQEVTGTLGQSLP). The helical transmembrane segment at 582–604 (SIAAILILMFTCLFLFSAVLRAL) threads the bilayer. The Extracellular segment spans residues 605-615 (FRKSDPKRFQN). Residues 616 to 628 (IFTTIFTLFTLLT) constitute an intramembrane region (helical; Pore-forming). The Extracellular segment spans residues 629-645 (LDDWSLIYMDSRAQGAW). Residues 646 to 671 (YIIPILVIYIIIQYFIFLNLVITVLV) form a helical membrane-spanning segment. The Cytoplasmic portion of the chain corresponds to 672–780 (DSFQTALFKG…FEAGEEDFRN (109 aa)).

The protein belongs to the cation channel sperm-associated (TC 1.A.1.19) family. Component of the CatSper complex or CatSpermasome composed of the core pore-forming members CATSPER1, CATSPER2, CATSPER3 and CATSPER4 as well as auxiliary members CATSPERB, CATSPERG, CATSPERD, CATSPERE, CATSPERZ, C2CD6/CATSPERT, TMEM249, TMEM262 and EFCAB9. HSPA1 may be an additional auxiliary complex member. The core complex members CATSPER1, CATSPER2, CATSPER3 and CATSPER4 form a heterotetrameric channel. The auxiliary CATSPERB, CATSPERG, CATSPERD and CATSPERE subunits form a pavilion-like structure over the pore which stabilizes the complex through interactions with CATSPER4, CATSPER3, CATSPER1 and CATSPER2 respectively. TMEM262/CATSPERH interacts with CATSPERB, further stabilizing the complex. C2CD6/CATSPERT interacts at least with CATSPERD and is required for targeting the CatSper complex in the flagellar membrane. Interacts with Ca(v)3.3/CACNA1I, leading to suppression of T-type calcium channel activity. In terms of tissue distribution, testis-specific.

Its subcellular location is the cell projection. It localises to the cilium. The protein localises to the flagellum membrane. The enzyme catalyses Ca(2+)(in) = Ca(2+)(out). With respect to regulation, the CatSper calcium channel is indirectly activated by extracellular progesterone and prostaglandins following the sequence: progesterone &gt; PGF1-alpha = PGE1 &gt; PGA1 &gt; PGE2 &gt;&gt; PGD2. The CatSper calcium channel is directly inhibited by endocannabinoid 2-arachidonoylglycerol (2AG). Indirect activation by progesterone takes place via the following mechanism: progesterone binds and activates the acylglycerol lipase ABHD2, which in turn mediates hydrolysis of 2AG inhibitor, relieving inhibition of the CatSper channel. The primary effect of progesterone activation is to shift voltage dependence towards more physiological, negative membrane potentials; it is not mediated by metabotropic receptors and second messengers. Sperm capacitation enhances the effect of progesterone by providing additional negative shift. Also activated by the elevation of intracellular pH. Its function is as follows. Pore-forming subunit of the CatSper complex, a sperm-specific voltage-gated calcium channel that plays a central role in calcium-dependent physiological responses essential for successful fertilization, such as sperm hyperactivation, acrosome reaction and chemotaxis towards the oocyte. The polypeptide is Cation channel sperm-associated protein 1 (CATSPER1) (Homo sapiens (Human)).